A 64-amino-acid chain; its full sequence is Prokaryotic ubiquitin-like protein UBact (64 aa).

Basic and acidic residues-rich tracts occupy residues M1 to Q12 and P33 to E64. The tract at residues M1–E64 is disordered. An Isoglutamyl lysine isopeptide (Glu-Lys) (interchain with K-? in acceptor proteins) cross-link involves residue E64.

This sequence belongs to the ubiquitin-like protein UBact family.

Functionally, may function as a protein modifier covalently attached to lysine residues of substrate proteins. This may serve to target the modified proteins for degradation by proteasomes. The protein is Prokaryotic ubiquitin-like protein UBact of Chthonomonas calidirosea (strain DSM 23976 / ICMP 18418 / T49).